A 457-amino-acid polypeptide reads, in one-letter code: uncharacterized protein (457 aa).

The TRAM domain maps to 10-69 (ALLQGQTVTVPITALAAGGDGIARLTDGRVLFVAGAVPGDTVEARLVHLKKDHGFGKILQ). Residues Cys82, Cys88, Cys91, and Cys170 each coordinate [4Fe-4S] cluster. S-adenosyl-L-methionine contacts are provided by Gln294, Tyr323, Glu344, and Asp387. Residue Cys414 is the Nucleophile of the active site.

It belongs to the class I-like SAM-binding methyltransferase superfamily. RNA M5U methyltransferase family.

This is an uncharacterized protein from Gloeobacter violaceus (strain ATCC 29082 / PCC 7421).